Consider the following 240-residue polypeptide: UDP-2,3-diacylglucosamine hydrolase (240 aa).

Positions 7, 9, 40, 78, and 113 each coordinate Mn(2+). 78 to 79 (NR) contributes to the substrate binding site. Substrate contacts are provided by aspartate 121, serine 159, lysine 166, and histidine 194. Mn(2+) is bound by residues histidine 194 and histidine 196.

It belongs to the LpxH family. The cofactor is Mn(2+).

The protein resides in the cell inner membrane. It catalyses the reaction UDP-2-N,3-O-bis[(3R)-3-hydroxytetradecanoyl]-alpha-D-glucosamine + H2O = 2-N,3-O-bis[(3R)-3-hydroxytetradecanoyl]-alpha-D-glucosaminyl 1-phosphate + UMP + 2 H(+). The protein operates within glycolipid biosynthesis; lipid IV(A) biosynthesis; lipid IV(A) from (3R)-3-hydroxytetradecanoyl-[acyl-carrier-protein] and UDP-N-acetyl-alpha-D-glucosamine: step 4/6. Hydrolyzes the pyrophosphate bond of UDP-2,3-diacylglucosamine to yield 2,3-diacylglucosamine 1-phosphate (lipid X) and UMP by catalyzing the attack of water at the alpha-P atom. Involved in the biosynthesis of lipid A, a phosphorylated glycolipid that anchors the lipopolysaccharide to the outer membrane of the cell. The chain is UDP-2,3-diacylglucosamine hydrolase from Pseudomonas putida (strain ATCC 700007 / DSM 6899 / JCM 31910 / BCRC 17059 / LMG 24140 / F1).